Here is a 634-residue protein sequence, read N- to C-terminus: Replication protein E1 (634 aa).

The Nuclear localization signal signature appears at 85–87 (KRK). Phosphoserine; by host is present on residues serine 91 and serine 95. A disordered region spans residues 92–117 (PRSSPLGDITNQNNTHSHSQANESQV). Polar residues predominate over residues 100–115 (ITNQNNTHSHSQANES). The interval 172–338 (CANVELNSIC…QTQLQHSFED (167 aa)) is DNA-binding region. An SF3 helicase domain is found at 437-587 (VNFMSFIQMF…FPFDNNGNAV (151 aa)). 463–470 (GPPNTGKS) contributes to the ATP binding site.

It belongs to the papillomaviridae E1 protein family. Can form hexamers. Interacts with E2 protein; this interaction increases E1 DNA binding specificity. Interacts with host DNA polymerase subunit POLA2. Interacts with host single stranded DNA-binding protein RPA1. Interacts with host TOP1; this interaction stimulates the enzymatic activity of TOP1. Phosphorylated.

The protein localises to the host nucleus. It catalyses the reaction Couples ATP hydrolysis with the unwinding of duplex DNA by translocating in the 3'-5' direction.. The enzyme catalyses ATP + H2O = ADP + phosphate + H(+). ATP-dependent DNA 3'-5' helicase required for initiation of viral DNA replication. It forms a complex with the viral E2 protein. The E1-E2 complex binds to the replication origin which contains binding sites for both proteins. During the initial step, a dimer of E1 interacts with a dimer of protein E2 leading to a complex that binds the viral origin of replication with high specificity. Then, a second dimer of E1 displaces the E2 dimer in an ATP-dependent manner to form the E1 tetramer. Following this, two E1 monomers are added to each half of the site, which results in the formation of two E1 trimers on the viral ori. Subsequently, two hexamers will be created. The double hexamer acts as a bi-directional helicase machinery and unwinds the viral DNA and then recruits the host DNA polymerase to start replication. The chain is Replication protein E1 from Homo sapiens (Human).